Reading from the N-terminus, the 416-residue chain is Probable endo-beta-1,4-glucanase celB (416 aa).

The N-terminal stretch at 1–17 (MIWTLAPFVALLPLVTA) is a signal peptide. N-linked (GlcNAc...) asparagine glycosylation is found at Asn45, Asn104, Asn117, and Asn135. Glu214 acts as the Nucleophile in catalysis. The active-site Proton donor is Glu219. 4 N-linked (GlcNAc...) asparagine glycosylation sites follow: Asn233, Asn278, Asn292, and Asn382.

This sequence belongs to the glycosyl hydrolase 7 (cellulase C) family.

The protein localises to the secreted. The catalysed reaction is Endohydrolysis of (1-&gt;4)-beta-D-glucosidic linkages in cellulose, lichenin and cereal beta-D-glucans.. Functionally, has endoglucanase activity on substrates containing beta-1,4 glycosidic bonds, like in carboxymethylcellulose (CMC), hydroxyethylcellulose (HEC) and beta-glucan. Involved in the degradation of complex natural cellulosic substrates. The polypeptide is Probable endo-beta-1,4-glucanase celB (celB) (Aspergillus flavus (strain ATCC 200026 / FGSC A1120 / IAM 13836 / NRRL 3357 / JCM 12722 / SRRC 167)).